The chain runs to 368 residues: Homoserine O-acetyltransferase (368 aa).

Residues asparagine 43–glutamate 354 form the AB hydrolase-1 domain. Residue serine 148 is the Nucleophile of the active site. Arginine 220 contributes to the substrate binding site. Active-site residues include aspartate 314 and histidine 348. Position 349 (aspartate 349) interacts with substrate.

The protein belongs to the AB hydrolase superfamily. MetX family. As to quaternary structure, homodimer.

The protein localises to the cytoplasm. It carries out the reaction L-homoserine + acetyl-CoA = O-acetyl-L-homoserine + CoA. The protein operates within amino-acid biosynthesis; L-methionine biosynthesis via de novo pathway; O-acetyl-L-homoserine from L-homoserine: step 1/1. In terms of biological role, transfers an acetyl group from acetyl-CoA to L-homoserine, forming acetyl-L-homoserine. In Sulfurimonas autotrophica (strain ATCC BAA-671 / DSM 16294 / JCM 11897 / OK10), this protein is Homoserine O-acetyltransferase.